A 139-amino-acid chain; its full sequence is Phosphoribosyl-AMP cyclohydrolase (139 aa).

D92 serves as a coordination point for Mg(2+). C93 contacts Zn(2+). The Mg(2+) site is built by D94 and D96. Zn(2+)-binding residues include C111 and C118.

Belongs to the PRA-CH family. Homodimer. It depends on Mg(2+) as a cofactor. The cofactor is Zn(2+).

It is found in the cytoplasm. The catalysed reaction is 1-(5-phospho-beta-D-ribosyl)-5'-AMP + H2O = 1-(5-phospho-beta-D-ribosyl)-5-[(5-phospho-beta-D-ribosylamino)methylideneamino]imidazole-4-carboxamide. The protein operates within amino-acid biosynthesis; L-histidine biosynthesis; L-histidine from 5-phospho-alpha-D-ribose 1-diphosphate: step 3/9. Catalyzes the hydrolysis of the adenine ring of phosphoribosyl-AMP. The polypeptide is Phosphoribosyl-AMP cyclohydrolase (Caulobacter vibrioides (strain ATCC 19089 / CIP 103742 / CB 15) (Caulobacter crescentus)).